Here is a 367-residue protein sequence, read N- to C-terminus: Alginate lyase (367 aa).

The N-terminal stretch at 1–24 is a signal peptide; sequence MTLLKRISSPALLALALFGGAAHA. Substrate is bound by residues 63 to 64, 136 to 137, and Y254; these read SK and HT.

Belongs to the polysaccharide lyase 5 family.

It localises to the periplasm. It catalyses the reaction Eliminative cleavage of alginate to give oligosaccharides with 4-deoxy-alpha-L-erythro-hex-4-enuronosyl groups at their non-reducing ends and beta-D-mannuronate at their reducing end.. Catalyzes the depolymerization of alginate by cleaving the beta-1,4 glycosidic bond between two adjacent sugar residues via a beta-elimination mechanism. May serve to degrade mislocalized alginate that is trapped in the periplasmic space. The protein is Alginate lyase of Pseudomonas putida (strain GB-1).